The sequence spans 355 residues: 3,4-dihydroxy-2-butanone 4-phosphate synthase (355 aa).

A DHBP synthase region spans residues 1-202 (MYHKRIKEAI…VSDIIQYRLN (202 aa)). Residues 27–28 (RE), Asp-32, 139–143 (RTGHT), and Glu-163 contribute to the D-ribulose 5-phosphate site. Residue Glu-28 coordinates Mg(2+). Residue His-142 participates in Mg(2+) binding. The tract at residues 203-355 (FENLLREITR…NLHLVEKIEV (153 aa)) is GTP cyclohydrolase II-like.

In the N-terminal section; belongs to the DHBP synthase family. It in the C-terminal section; belongs to the GTP cyclohydrolase II family. Mg(2+) is required as a cofactor. Requires Mn(2+) as cofactor.

It carries out the reaction D-ribulose 5-phosphate = (2S)-2-hydroxy-3-oxobutyl phosphate + formate + H(+). It functions in the pathway cofactor biosynthesis; riboflavin biosynthesis; 2-hydroxy-3-oxobutyl phosphate from D-ribulose 5-phosphate: step 1/1. In terms of biological role, catalyzes the conversion of D-ribulose 5-phosphate to formate and 3,4-dihydroxy-2-butanone 4-phosphate. In Helicobacter hepaticus (strain ATCC 51449 / 3B1), this protein is 3,4-dihydroxy-2-butanone 4-phosphate synthase (ribB).